A 443-amino-acid chain; its full sequence is GTPase Der (443 aa).

EngA-type G domains are found at residues 3–167 and 176–349; these read PVIA…PEEK and IKIA…QSIQ. GTP is bound by residues 9-16, 56-60, 119-122, 182-189, 229-233, and 294-297; these read GRPNVGKS, DTGGL, NKAD, DTAGI, and NKWD. The KH-like domain maps to 350-434; that stretch reads QELTTGQLTR…PVHIKLKTDP (85 aa).

The protein belongs to the TRAFAC class TrmE-Era-EngA-EngB-Septin-like GTPase superfamily. EngA (Der) GTPase family. In terms of assembly, associates with the 50S ribosomal subunit.

Functionally, GTPase that plays an essential role in the late steps of ribosome biogenesis. In Coxiella burnetii (strain CbuK_Q154) (Coxiella burnetii (strain Q154)), this protein is GTPase Der.